The following is a 20-amino-acid chain: Non-specific lipid-transfer protein (20 aa).

This sequence belongs to the plant LTP family.

Plant non-specific lipid-transfer proteins transfer phospholipids as well as galactolipids across membranes. May play a role in wax or cutin deposition in the cell walls of expanding epidermal cells and certain secretory tissues. In Citrus sinensis (Sweet orange), this protein is Non-specific lipid-transfer protein.